A 198-amino-acid chain; its full sequence is Large ribosomal subunit protein uL5 (198 aa).

It belongs to the universal ribosomal protein uL5 family. Part of the 50S ribosomal subunit; part of the 5S rRNA/L5/L18/L25 subcomplex. Contacts the 5S rRNA and the P site tRNA. Forms a bridge to the 30S subunit in the 70S ribosome.

In terms of biological role, this is one of the proteins that bind and probably mediate the attachment of the 5S RNA into the large ribosomal subunit, where it forms part of the central protuberance. In the 70S ribosome it contacts protein S13 of the 30S subunit (bridge B1b), connecting the 2 subunits; this bridge is implicated in subunit movement. Contacts the P site tRNA; the 5S rRNA and some of its associated proteins might help stabilize positioning of ribosome-bound tRNAs. The polypeptide is Large ribosomal subunit protein uL5 (Chlorobium phaeovibrioides (strain DSM 265 / 1930) (Prosthecochloris vibrioformis (strain DSM 265))).